A 609-amino-acid polypeptide reads, in one-letter code: Glutamine--fructose-6-phosphate aminotransferase [isomerizing] (609 aa).

Catalysis depends on cysteine 2, which acts as the Nucleophile; for GATase activity. The region spanning 2–217 is the Glutamine amidotransferase type-2 domain; sequence CGIVGAIAGR…DGDTAEIRRD (216 aa). 2 SIS domains span residues 285-425 and 458-599; these read AESV…LRGA and WAEC…VDKP. Lysine 604 serves as the catalytic For Fru-6P isomerization activity.

In terms of assembly, homodimer.

It is found in the cytoplasm. The enzyme catalyses D-fructose 6-phosphate + L-glutamine = D-glucosamine 6-phosphate + L-glutamate. Catalyzes the first step in hexosamine metabolism, converting fructose-6P into glucosamine-6P using glutamine as a nitrogen source. The protein is Glutamine--fructose-6-phosphate aminotransferase [isomerizing] of Xylella fastidiosa (strain Temecula1 / ATCC 700964).